The chain runs to 451 residues: Uronate isomerase (451 aa).

Belongs to the metallo-dependent hydrolases superfamily. Uronate isomerase family.

The enzyme catalyses D-glucuronate = D-fructuronate. The catalysed reaction is aldehydo-D-galacturonate = keto-D-tagaturonate. Its pathway is carbohydrate metabolism; pentose and glucuronate interconversion. The sequence is that of Uronate isomerase from Thermotoga petrophila (strain ATCC BAA-488 / DSM 13995 / JCM 10881 / RKU-1).